The chain runs to 215 residues: Cytochrome b6 (215 aa).

A helical membrane pass occupies residues 32–52; the sequence is IFYCLGGITLTCFLVQVATGF. C35 contributes to the heme c binding site. Positions 86 and 100 each coordinate heme b. 3 helical membrane-spanning segments follow: residues 90–110, 116–136, and 186–206; these read ASMM…TGGF, LTWV…VTGY, and LHTF…FLMI. Heme b is bound by residues H187 and H202.

Belongs to the cytochrome b family. PetB subfamily. In terms of assembly, the 4 large subunits of the cytochrome b6-f complex are cytochrome b6, subunit IV (17 kDa polypeptide, PetD), cytochrome f and the Rieske protein, while the 4 small subunits are PetG, PetL, PetM and PetN. The complex functions as a dimer. Heme b serves as cofactor. Heme c is required as a cofactor.

Its subcellular location is the plastid. It localises to the chloroplast thylakoid membrane. Functionally, component of the cytochrome b6-f complex, which mediates electron transfer between photosystem II (PSII) and photosystem I (PSI), cyclic electron flow around PSI, and state transitions. This Nicotiana tabacum (Common tobacco) protein is Cytochrome b6.